We begin with the raw amino-acid sequence, 379 residues long: Cytochrome b (379 aa).

Helical transmembrane passes span 32–52, 76–98, 111–131, and 177–197; these read YGSL…VLAT, WLLR…LHIG, VWNI…LGYV, and FFAL…LHIF. 2 residues coordinate heme b: histidine 82 and histidine 96. Residues histidine 181 and histidine 195 each coordinate heme b. An a ubiquinone-binding site is contributed by histidine 200. 4 consecutive transmembrane segments (helical) span residues 223–243, 287–304, 320–340, and 348–367; these read YSVK…VFTL, LGGV…FLFS, LARL…WLGS, and NEVA…TMCA.

Belongs to the cytochrome b family. The main subunits of complex b-c1 are: cytochrome b, cytochrome c1 and the Rieske protein. The cofactor is heme b.

Its subcellular location is the mitochondrion inner membrane. Functionally, component of the ubiquinol-cytochrome c reductase complex (complex III or cytochrome b-c1 complex) that is part of the mitochondrial respiratory chain. The b-c1 complex mediates electron transfer from ubiquinol to cytochrome c. Contributes to the generation of a proton gradient across the mitochondrial membrane that is then used for ATP synthesis. The chain is Cytochrome b (mt:Cyt-b) from Brachionus plicatilis (Marine rotifer).